Consider the following 366-residue polypeptide: tRNA/tmRNA (uracil-C(5))-methyltransferase (366 aa).

5 residues coordinate S-adenosyl-L-methionine: glutamine 190, tyrosine 218, asparagine 223, glutamate 239, and aspartate 299. Catalysis depends on cysteine 324, which acts as the Nucleophile. The active-site Proton acceptor is glutamate 358.

Belongs to the class I-like SAM-binding methyltransferase superfamily. RNA M5U methyltransferase family. TrmA subfamily.

It carries out the reaction uridine(54) in tRNA + S-adenosyl-L-methionine = 5-methyluridine(54) in tRNA + S-adenosyl-L-homocysteine + H(+). The catalysed reaction is uridine(341) in tmRNA + S-adenosyl-L-methionine = 5-methyluridine(341) in tmRNA + S-adenosyl-L-homocysteine + H(+). Its function is as follows. Dual-specificity methyltransferase that catalyzes the formation of 5-methyluridine at position 54 (m5U54) in all tRNAs, and that of position 341 (m5U341) in tmRNA (transfer-mRNA). In Enterobacter sp. (strain 638), this protein is tRNA/tmRNA (uracil-C(5))-methyltransferase.